The sequence spans 638 residues: 3D-(3,5/4)-trihydroxycyclohexane-1,2-dione hydrolase (638 aa).

Glu-67 serves as a coordination point for thiamine diphosphate. The segment at 442-523 (SLPGDLQRLW…INIMLFDNSG (82 aa)) is thiamine pyrophosphate binding. The Mg(2+) site is built by Asp-494 and Asn-521.

Belongs to the TPP enzyme family. It depends on Mg(2+) as a cofactor. The cofactor is thiamine diphosphate.

The catalysed reaction is 3D-3,5/4-trihydroxycyclohexane-1,2-dione + H2O = 5-deoxy-D-glucuronate + H(+). Its pathway is polyol metabolism; myo-inositol degradation into acetyl-CoA; acetyl-CoA from myo-inositol: step 3/7. Involved in the cleavage of the C1-C2 bond of 3D-(3,5/4)-trihydroxycyclohexane-1,2-dione (THcHDO) to yield 5-deoxy-glucuronate (5DG). The chain is 3D-(3,5/4)-trihydroxycyclohexane-1,2-dione hydrolase from Listeria monocytogenes serotype 4b (strain F2365).